Reading from the N-terminus, the 823-residue chain is Hypoxia-inducible factor 1-alpha (823 aa).

Residues 1–30 (MEGAGGANDKKKISSERRKEKSRDAARSRR) are disordered. Positions 1–401 (MEGAGGANDK…KEPDALTLLA (401 aa)) are interaction with TSGA10. Basic and acidic residues predominate over residues 8 to 30 (NDKKKISSERRKEKSRDAARSRR). Positions 17-70 (RRKEKSRDAARSRRSKESEVFYELAHQLPLPHNVSSHLDKASVMRLTISYLRVR) constitute a bHLH domain. The DNA-binding stretch occupies residues 21-30 (KSRDAARSRR). Residues 85 to 158 (KAQMNCFYLK…THRNGLVKKG (74 aa)) form the PAS 1 domain. Positions 170–191 (RMKCTLTSRGRTMNIKSATWKV) are required for heterodimer formation with ARNT. The PAS 2 domain occupies 228-298 (PHPSNIEIPL…KTHHDMFTKG (71 aa)). Position 247 is a phosphoserine; by CK1 (Ser247). The PAC domain maps to 302 to 345 (TGQYRMLAKRGGYVWIETQATVIYNTKNSQPQCIVCVNYVVSGI). An ODD region spans residues 401 to 600 (APAAGDTIIS…QSASTNTVFQ (200 aa)). Pro402 bears the 4-hydroxyproline mark. The segment covering 494-517 (IQDQPASPSDGSTRQSSPEPNSPS) has biased composition (polar residues). The disordered stretch occupies residues 494 to 521 (IQDQPASPSDGSTRQSSPEPNSPSEYCF). Residues 531–575 (FKLELVEKLFAEDTEAKNPFSTQDTDLDLEMLAPYIPMDDDFQLR) are NTAD. Residue Lys532 is modified to N6-acetyllysine; alternate. Lys532 participates in a covalent cross-link: Glycyl lysine isopeptide (Lys-Gly) (interchain with G-Cter in ubiquitin); alternate. Residues Lys538 and Lys547 each participate in a glycyl lysine isopeptide (Lys-Gly) (interchain with G-Cter in ubiquitin) cross-link. Ser551 is subject to Phosphoserine; by GSK3-beta. Thr555 is modified (phosphothreonine; by GSK3-beta). A 4-hydroxyproline modification is found at Pro564. At Ser576 the chain carries Phosphoserine; by PLK3. Residues 576–782 (SFDQLSPLEN…SDLACRLLGQ (207 aa)) form an ID region. 2 disordered regions span residues 581-602 (SPLE…FQPT) and 639-685 (PSPP…PRSP). The residue at position 589 (Ser589) is a Phosphoserine; by GSK3-beta. Over residues 651-666 (ATTSPYSDTGSRTASP) the composition is skewed to polar residues. At Ser654 the chain carries Phosphoserine; by PLK3. Lys706 is modified (N6-acetyllysine). The Nuclear localization signal motif lies at 715-721 (RKRKIEH). The tract at residues 783–823 (SMDESGLPQLTSYDCEVNAPIQGSRNLLQGEELLRALDQVN) is CTAD. An S-nitrosocysteine modification is found at Cys797. Residue Asn800 is modified to (3S)-3-hydroxyasparagine.

In terms of assembly, interacts with the ARNT; forms a heterodimer that binds core DNA sequence 5'-TACGTG-3' within the hypoxia response element (HRE) of target gene promoters. Interacts with COPS5; the interaction increases the transcriptional activity of HIF1A through increased stability. Interacts with EP300 (via TAZ-type 1 domains); the interaction is stimulated in response to hypoxia and inhibited by CITED2. Interacts with CREBBP (via TAZ-type 1 domains). Interacts with NCOA1, NCOA2, APEX1 and HSP90. Interacts (hydroxylated within the ODD domain) with VHLL (via beta domain); the interaction, leads to polyubiquitination and subsequent HIF1A proteasomal degradation. During hypoxia, sumoylated HIF1A also binds VHL; the interaction promotes the ubiquitination of HIF1A. Interacts with SENP1; the interaction desumoylates HIF1A resulting in stabilization and activation of transcription. Interacts (via the ODD domain) with NAA10; the interaction appears not to acetylate HIF1A nor have any affect on protein stability, during hypoxia. Interacts with RWDD3; the interaction enhances HIF1A sumoylation. Interacts with TSGA10. Interacts with HIF3A. Interacts with RORA (via the DNA binding domain); the interaction enhances HIF1A transcription under hypoxia through increasing protein stability. Interaction with PSMA7 inhibits the transactivation activity of HIF1A under both normoxic and hypoxia-mimicking conditions. Interacts with USP20. Interacts with RACK1; promotes HIF1A ubiquitination and proteasome-mediated degradation. Interacts (via N-terminus) with USP19. Interacts with SIRT2. Interacts (deacetylated form) with EGLN1. Interacts with CBFA2T3. Interacts with HSP90AA1 and HSP90AB1. Interacts with DCUN1D1; this interaction increases the interaction between VHL and DCUN1D1. Interacts with HIF1AN. S-nitrosylation of Cys-797 may be responsible for increased recruitment of p300 coactivator necessary for transcriptional activity of HIF-1 complex. In terms of processing, acetylation of Lys-532 by ARD1 increases interaction with VHL and stimulates subsequent proteasomal degradation. Deacetylation of Lys-706 by SIRT2 increases its interaction with and hydroxylation by EGLN1 thereby inactivating HIF1A activity by inducing its proteasomal degradation. Post-translationally, ubiquitinated; in normoxia, following hydroxylation and interaction with VHL. Lys-532 appears to be the principal site of ubiquitination. Clioquinol, the Cu/Zn-chelator, inhibits ubiquitination through preventing hydroxylation at Asn-800. Ubiquitinated by E3 ligase VHL. Deubiquitinated by UCHL1. Requires phosphorylation for DNA-binding. Phosphorylation at Ser-247 by CSNK1D/CK1 represses kinase activity and impairs ARNT binding. Phosphorylation by GSK3-beta and PLK3 promote degradation by the proteasome. In terms of processing, the iron and 2-oxoglutarate dependent 3-hydroxylation of asparagine is (S) stereospecific within HIF CTAD domains. Post-translationally, sumoylated; with SUMO1 under hypoxia. Sumoylation is enhanced through interaction with RWDD3. Both sumoylation and desumoylation seem to be involved in the regulation of its stability during hypoxia. Sumoylation can promote either its stabilization or its VHL-dependent degradation by promoting hydroxyproline-independent HIF1A-VHL complex binding, thus leading to HIF1A ubiquitination and proteasomal degradation. Desumoylation by SENP1 increases its stability amd transcriptional activity. There is a disaccord between various publications on the effect of sumoylation and desumoylation on its stability and transcriptional activity. In normoxia, is hydroxylated on Pro-402 and Pro-564 in the oxygen-dependent degradation domain (ODD) by EGLN1/PHD2 and EGLN2/PHD1. EGLN3/PHD3 has also been shown to hydroxylate Pro-564. The hydroxylated prolines promote interaction with VHL, initiating rapid ubiquitination and subsequent proteasomal degradation. Deubiquitinated by USP20. Under hypoxia, proline hydroxylation is impaired and ubiquitination is attenuated, resulting in stabilization. In normoxia, is hydroxylated on Asn-800 by HIF1AN, thus abrogating interaction with CREBBP and EP300 and preventing transcriptional activation. Repressed by iron ion, via Fe(2+) prolyl hydroxylase (PHD) enzymes-mediated hydroxylation and subsequent proteasomal degradation.

The protein localises to the cytoplasm. It localises to the nucleus. Induced by reactive oxygen species (ROS). Its function is as follows. Functions as a master transcriptional regulator of the adaptive response to hypoxia. Under hypoxic conditions, activates the transcription of over 40 genes, including erythropoietin, glucose transporters, glycolytic enzymes, vascular endothelial growth factor, HILPDA, and other genes whose protein products increase oxygen delivery or facilitate metabolic adaptation to hypoxia. Plays an essential role in embryonic vascularization, tumor angiogenesis and pathophysiology of ischemic disease. Heterodimerizes with ARNT; heterodimer binds to core DNA sequence 5'-TACGTG-3' within the hypoxia response element (HRE) of target gene promoters. Activation requires recruitment of transcriptional coactivators such as CREBBP and EP300. Activity is enhanced by interaction with NCOA1 and/or NCOA2. Interaction with redox regulatory protein APEX1 seems to activate CTAD and potentiates activation by NCOA1 and CREBBP. Involved in the axonal distribution and transport of mitochondria in neurons during hypoxia. The polypeptide is Hypoxia-inducible factor 1-alpha (HIF1A) (Bos taurus (Bovine)).